The primary structure comprises 121 residues: Two-component response regulator ORR13 (121 aa).

A Response regulatory domain is found at 5–121 (HVLVVDDTHV…ADVPRILNYI (117 aa)). The residue at position 55 (aspartate 55) is a 4-aspartylphosphate.

It belongs to the ARR family. Type-A subfamily. In terms of processing, two-component system major event consists of a His-to-Asp phosphorelay between a sensor histidine kinase (HK) and a response regulator (RR). In plants, the His-to-Asp phosphorelay involves an additional intermediate named Histidine-containing phosphotransfer protein (HPt). This multistep phosphorelay consists of a His-Asp-His-Asp sequential transfer of a phosphate group between first a His and an Asp of the HK protein, followed by the transfer to a conserved His of the HPt protein and finally the transfer to an Asp in the receiver domain of the RR protein. As to expression, expressed in flowers and panicles.

Functionally, functions as a response regulator involved in His-to-Asp phosphorelay signal transduction system. Phosphorylation of the Asp residue in the receiver domain activates the ability of the protein to promote the transcription of target genes. Type-A response regulators seem to act as negative regulators of the cytokinin signaling. This Oryza sativa subsp. japonica (Rice) protein is Two-component response regulator ORR13.